A 428-amino-acid polypeptide reads, in one-letter code: Gamma-glutamyl phosphate reductase (428 aa).

Belongs to the gamma-glutamyl phosphate reductase family.

Its subcellular location is the cytoplasm. It carries out the reaction L-glutamate 5-semialdehyde + phosphate + NADP(+) = L-glutamyl 5-phosphate + NADPH + H(+). It functions in the pathway amino-acid biosynthesis; L-proline biosynthesis; L-glutamate 5-semialdehyde from L-glutamate: step 2/2. In terms of biological role, catalyzes the NADPH-dependent reduction of L-glutamate 5-phosphate into L-glutamate 5-semialdehyde and phosphate. The product spontaneously undergoes cyclization to form 1-pyrroline-5-carboxylate. This is Gamma-glutamyl phosphate reductase from Hyphomonas neptunium (strain ATCC 15444).